A 122-amino-acid chain; its full sequence is Histone H2B 1 (122 aa).

The interval 1–30 (MPPKPSAKGAKKAAKTVTKPKDGKKRRHAR) is disordered. S109 is a glycosylation site (O-linked (GlcNAc) serine). K117 participates in a covalent cross-link: Glycyl lysine isopeptide (Lys-Gly) (interchain with G-Cter in ubiquitin).

This sequence belongs to the histone H2B family. As to quaternary structure, the nucleosome is a histone octamer containing two molecules each of H2A, H2B, H3 and H4 assembled in one H3-H4 heterotetramer and two H2A-H2B heterodimers. The octamer wraps approximately 147 bp of DNA. In terms of processing, monoubiquitination of Lys-117 gives a specific tag for epigenetic transcriptional activation and is also prerequisite for histone H3 'Lys-4' and 'Lys-79' methylation. GlcNAcylation at Ser-109 promotes monoubiquitination of Lys-117. It fluctuates in response to extracellular glucose, and associates with transcribed genes.

The protein localises to the nucleus. It is found in the chromosome. Functionally, core component of nucleosome. Nucleosomes wrap and compact DNA into chromatin, limiting DNA accessibility to the cellular machineries which require DNA as a template. Histones thereby play a central role in transcription regulation, DNA repair, DNA replication and chromosomal stability. DNA accessibility is regulated via a complex set of post-translational modifications of histones, also called histone code, and nucleosome remodeling. This chain is Histone H2B 1 (his-11), found in Caenorhabditis elegans.